Reading from the N-terminus, the 566-residue chain is uncharacterized protein (566 aa).

This is an uncharacterized protein from Escherichia coli (strain K12).